A 353-amino-acid chain; its full sequence is Protein MGF 360-11L (353 aa).

Belongs to the asfivirus MGF 360 family. Interacts with host TBK1 ad IRF7.

Functionally, plays a role in virus cell tropism, and may be required for efficient virus replication in macrophages. In addition, inhibits the phosphorylation of host TBK1 and IRF7 and thereby negatively regulates the host cGAS signaling pathway and antagonizes IFN-mediated antiviral activity. The polypeptide is Protein MGF 360-11L (Ornithodoros (relapsing fever ticks)).